We begin with the raw amino-acid sequence, 500 residues long: FAD-linked oxidoreductase chyH (500 aa).

The N-terminal stretch at 1–20 is a signal peptide; it reads MRLQAVTAVAAWAVASACQS. One can recognise an FAD-binding PCMH-type domain in the interval 65–235; it reads LEVPTVNIVI…TSVTSKTYDI (171 aa). Asn-199, Asn-266, Asn-275, and Asn-383 each carry an N-linked (GlcNAc...) asparagine glycan.

Belongs to the oxygen-dependent FAD-linked oxidoreductase family. FAD serves as cofactor.

It participates in pigment biosynthesis. Functionally, FAD-linked oxidoreductase; part of the gene cluster that mediates the biosynthesis of the yellow pigment chrysogine. the NRPS chyA mediates the condensation of anthranilic acid and alanine into the intermediate 2-(2-aminopropanamido)benzoic acid. The remainder of the pathway is highly branched yielding at least 13 chrysogine-related compounds. The malonyl transferase chyE converts 2-(2-aminopropanamido)benzoic acid and 2-(2-aminopropanamido)benzamidine into 2-(2-(2-carboxyacetamido)propanamido)benzoic acid and 3-((1-((2-carbamoylphenyl)amino)-1-oxopropan-2-yl)amino)-3-oxopropanoic acid, respectively. ChyD is an amidase, being responsible for the amidation of the carboxylic acid moiety of 2-(2-aminopropanamido)benzoic acid, 2-(2-(2-carboxyacetamido)propanamido)benzoic acid and 2-(2-((4-amino-1-carboxy-4-oxobutyl)amino)propanamido)benzoic acid. ChyC is involved in the same reactions as ChyD, but plays a more minor role in the amidation reactions compared to chyD. The oxidoreductases chyH and chyM are involved in oxidation reactions that form N-pyruvoylanthranilamide from 2-(2-aminopropanamido)benzamidine and (1-((2-carbamoylphenyl)amino)-1-oxopropan-2-yl)glutamine, respectively. N-pyruvoylanthranilamide is further converted via two further branches in the pathway, yielding chrysogine and additional chrysogine-related coumpounds. Chrysogine is likely formed by a spontaneous ring closure from N-pyruvoylanthranilamide. This Penicillium rubens (strain ATCC 28089 / DSM 1075 / NRRL 1951 / Wisconsin 54-1255) (Penicillium chrysogenum) protein is FAD-linked oxidoreductase chyH.